Reading from the N-terminus, the 688-residue chain is MNPLALLVEILIIIEVTTKNSEAERYNRKQKEVNVTTQVSVSKVKQFLSHLLEQGKANKIANKRENPLEKKKHQHKLKIKGIQNKNLLKRNQNYFKKPAKKSITDKGDELFKMGNKILQESKSQKQKTEAYTFFTRAADMGNLKAMEKMADALLFGSFGMQNITAAIQLYESLAKEGSYKAQNALGFLSSYGIGMEYDQAKALIYYTFGSAGGSMMSQMILGYRYLSGINVLQNCEVALNHYKKVADYIADKLEKSEGIPVEKVRLTERPENLSSNSEILDWDIYQYYKFLAERGDVQIQVSLGQLHLIGRKGLDQDYSKALYYFLKAAKAGSANAMAFIGKMYLEGNAAAPQNNATAFKYFSMAASKGNAIGLHGLGLLYFHGKGVPVNYGEALKYFQKAAEKGWPNAQFHLGFMYYSGSGVWKDYKLAFKYFYLASQSGQPLAIYYLAEMYATGTGVLRSCRTAVEPYKGVCELGHWAEKFLTAYFAYKDGDVDSSLIQYALLAEMGYEVAQSNSAFILESKKAKILGKEKMYPMALLLWNRAAIQGNAFARVKIGDYHYYGYGTKKDYETAATHYSIAADKHHSAQAMFNLAYMYEHGLGIAQDIHLARRLYDMAAQTSPDAHIPVFFALMKLETMHFLQDILFFNFTTKWKWLKLDSTIGPYWDLLVIGLIVVVLIFLLRNHHR.

A signal peptide spans 1–18 (MNPLALLVEILIIIEVTT). Topologically, residues 19–662 (KNSEAERYNR…KWKWLKLDST (644 aa)) are extracellular. The N-linked (GlcNAc...) asparagine glycan is linked to asparagine 34. Sel1-like repeat units lie at residues 107–142 (GDEL…DMGN), 143–178 (LKAM…KEGS), 179–214 (YKAQ…AGGS), 215–250 (MMSQ…DYIA), 297–333 (VQIQ…KAGS), 334–370 (ANAM…SKGN), 371–406 (AIGL…EKGW), 407–442 (PNAQ…QSGQ), 443–478 (PLAI…ELGH), 551–586 (AFAR…DKHH), and 588–623 (AQAM…QTSP). Asparagine 162 carries N-linked (GlcNAc...) asparagine glycosylation. A helical membrane pass occupies residues 663-683 (IGPYWDLLVIGLIVVVLIFLL). Residues 684 to 688 (RNHHR) are Cytoplasmic-facing.

It belongs to the sel-1 family.

The protein localises to the membrane. It is found in the cell projection. The protein resides in the cilium. It localises to the nucleus speckle. The chain is Protein sel-1 homolog 2 (Sel1l2) from Rattus norvegicus (Rat).